Reading from the N-terminus, the 500-residue chain is Cytochrome P450 monooxygenase ausI (500 aa).

The chain crosses the membrane as a helical span at residues 8–28 (LALLGQPLVPGLMVVSAILYL). A heme-binding site is contributed by Cys-440.

It belongs to the cytochrome P450 family. Heme is required as a cofactor.

It is found in the membrane. The protein operates within secondary metabolite biosynthesis; terpenoid biosynthesis. In terms of biological role, cytochrome P450 monooxygenase; part of the gene cluster B that mediates the biosynthesis of the fungal meroterpenoid acetoxydehydroaustin. The first step of the pathway is the synthesis of 3,5-dimethylorsellinic acid by the polyketide synthase ausA. 3,5-dimethylorsellinic acid is then prenylated by the polyprenyl transferase ausN. Further epoxidation by the FAD-dependent monooxygenase ausM and cyclization by the probable terpene cyclase ausL lead to the formation of protoaustinoid A. Protoaustinoid A is then oxidized to spiro-lactone preaustinoid A3 by the combined action of the FAD-binding monooxygenases ausB and ausC, and the dioxygenase ausE. Acid-catalyzed keto-rearrangement and ring contraction of the tetraketide portion of preaustinoid A3 by ausJ lead to the formation of preaustinoid A4. The aldo-keto reductase ausK, with the help of ausH, is involved in the next step by transforming preaustinoid A4 into isoaustinone which is in turn hydroxylated by the P450 monooxygenase ausI to form austinolide. The cytochrome P450 monooxygenase ausG then modifies austinolide to austinol. Austinol is further acetylated to austin by the O-acetyltransferase ausP, which spontaneously changes to dehydroaustin. The cytochrome P450 monooxygenase then converts dehydroaustin is into 7-dehydrodehydroaustin. The hydroxylation catalyzed by ausR permits the second O-acetyltransferase ausQ to add an additional acetyl group to the molecule, leading to the formation of acetoxydehydroaustin. Due to genetic rearrangements of the clusters and the subsequent loss of some enzymes, the end product of the Penicillium brasilianum austinoid biosynthesis clusters is acetoxydehydroaustin. This Penicillium brasilianum protein is Cytochrome P450 monooxygenase ausI.